The primary structure comprises 327 residues: Acetaldehyde dehydrogenase 6 (327 aa).

15–18 (SGNI) contributes to the NAD(+) binding site. Cys-133 functions as the Acyl-thioester intermediate in the catalytic mechanism. NAD(+) is bound by residues 164–172 (SAGPGTRAN) and Asn-297.

The protein belongs to the acetaldehyde dehydrogenase family.

It carries out the reaction acetaldehyde + NAD(+) + CoA = acetyl-CoA + NADH + H(+). The sequence is that of Acetaldehyde dehydrogenase 6 from Rhodococcus opacus (strain B4).